A 433-amino-acid chain; its full sequence is Trigger factor (433 aa).

The PPIase FKBP-type domain maps to 163 to 248 (GDFVTFDFKG…IKEIKVKELP (86 aa)).

This sequence belongs to the FKBP-type PPIase family. Tig subfamily.

The protein resides in the cytoplasm. It catalyses the reaction [protein]-peptidylproline (omega=180) = [protein]-peptidylproline (omega=0). Functionally, involved in protein export. Acts as a chaperone by maintaining the newly synthesized protein in an open conformation. Functions as a peptidyl-prolyl cis-trans isomerase. The chain is Trigger factor from Geotalea uraniireducens (strain Rf4) (Geobacter uraniireducens).